The sequence spans 148 residues: MIHAGTRPLRVLVTKIGLDGHDRGSRIVAAYLRDAGMEVIYTPPWQTIPGVVKLATEEDVDVIGISSLATDHLIVPKMMEALRAAGLGHVGVVVGGIVPEAEQSALAAAGVSRVFGPGAAREEIVECVTALGQKSRAERVDDYSEANP.

The region spanning P8 to E138 is the B12-binding domain. H21 is an adenosylcob(III)alamin binding site.

This sequence belongs to the acyl-CoA mutase small subunit family. In terms of assembly, monomer in the absence of the PCM large subunit. Weakly interacts with the PCM large subunit; an alpha(2)beta(2) stoichiometry seems to represent the active state of the enzyme. Adenosylcob(III)alamin is required as a cofactor.

The enzyme catalyses 3-methylbutanoyl-CoA = 2,2-dimethylpropanoyl-CoA. In terms of biological role, together with Xaut_5043, catalyzes the reversible isomerization between pivalyl-CoA and isovaleryl-CoA, using radical chemistry. Does not exhibit isobutyryl-CoA mutase (ICM) activity. This Xanthobacter autotrophicus (strain ATCC BAA-1158 / Py2) protein is Pivalyl-CoA mutase small subunit.